A 91-amino-acid chain; its full sequence is DNA-directed RNA polymerase subunit omega (91 aa).

It belongs to the RNA polymerase subunit omega family. The RNAP catalytic core consists of 2 alpha, 1 beta, 1 beta' and 1 omega subunit. When a sigma factor is associated with the core the holoenzyme is formed, which can initiate transcription.

The catalysed reaction is RNA(n) + a ribonucleoside 5'-triphosphate = RNA(n+1) + diphosphate. Promotes RNA polymerase assembly. Latches the N- and C-terminal regions of the beta' subunit thereby facilitating its interaction with the beta and alpha subunits. This chain is DNA-directed RNA polymerase subunit omega, found in Sodalis glossinidius (strain morsitans).